A 335-amino-acid chain; its full sequence is Adenosine deaminase (335 aa).

Positions 12 and 14 each coordinate Zn(2+). The substrate site is built by histidine 14 and aspartate 16. Zn(2+) is bound at residue histidine 197. Residue glutamate 200 is the Proton donor of the active site. Aspartate 278 is a binding site for Zn(2+).

It belongs to the metallo-dependent hydrolases superfamily. Adenosine and AMP deaminases family. Adenosine deaminase subfamily. The cofactor is Zn(2+).

It catalyses the reaction adenosine + H2O + H(+) = inosine + NH4(+). It carries out the reaction 2'-deoxyadenosine + H2O + H(+) = 2'-deoxyinosine + NH4(+). Its function is as follows. Catalyzes the hydrolytic deamination of adenosine and 2-deoxyadenosine. The protein is Adenosine deaminase of Clostridium botulinum (strain Langeland / NCTC 10281 / Type F).